The following is a 3412-amino-acid chain: Genome polyprotein (3412 aa).

At 1–104 (MSGRKAQGKT…LSSRKRRSNE (104 aa)) the chain is on the cytoplasmic side. Residues 38 to 72 (PGPSRGVQGFIFFFLFNILTGKKLTTHLKRLWRML) are hydrophobic; homodimerization of capsid protein C. A propeptide spans 102–121 (SNEMAMMPLLILSMVILAGG) (ER anchor for the capsid protein C, removed in mature form by serine protease NS3). The chain crosses the membrane as a helical span at residues 105-125 (MAMMPLLILSMVILAGGVTLV). Topologically, residues 126–244 (RKNRWLLLNV…GERQLQKIER (119 aa)) are extracellular. N-linked (GlcNAc...) asparagine; by host glycosylation is found at N134 and N150. Residues 245–265 (WLVRNPFFAITALAIAYLVGN) traverse the membrane as a helical segment. Residues 266–270 (NMTQR) are Cytoplasmic-facing. The helical transmembrane segment at 271 to 285 (VVIALLVLAVGPAYS) threads the bilayer. The Extracellular segment spans residues 286–730 (AHCIGITDRD…TVFGSAFQGL (445 aa)). Intrachain disulfides connect C288-C315, C345-C401, C345-C406, C359-C390, C377-C401, C377-C406, C467-C568, and C585-C615. Positions 383–396 (DRGWGNGCGLFGKG) are fusion peptide. Residues 731 to 751 (FGGLSWITKVIMGAVLIWVGI) form a helical membrane-spanning segment. At 752-757 (NTRNMT) the chain is on the extracellular side. The helical transmembrane segment at 758–778 (MSMSMILVGVIMMFLSLGVGA) threads the bilayer. Residues 779–1132 (DQGCAVNFGK…LVRSWVTAGE (354 aa)) lie on the Extracellular side of the membrane. 6 cysteine pairs are disulfide-bonded: C782-C793, C833-C921, C957-C1002, C1058-C1107, C1069-C1091, and C1090-C1094. N-linked (GlcNAc...) asparagine; by host glycosylation is found at N908 and N986. The chain crosses the membrane as a helical span at residues 1133–1153 (VHAVPFGLVSMMIAMEVVLRK). The Cytoplasmic portion of the chain corresponds to 1154–1201 (RQGPKQMLVGGIILLGAMLVGQVTVLDLVKLIVAVGLHFHEINNGGDA). The chain crosses the membrane as a helical span at residues 1202 to 1222 (MYMALIASFSIRPGLLVGFGL). The Lumenal portion of the chain corresponds to 1223–1287 (RTLWSPRERL…VLPLMALLTP (65 aa)). Residues 1288–1308 (VTMHEVRMATMLFCTVVIVGV) form a helical membrane-spanning segment. Residues 1309 to 1355 (LHQNAKDTSMQKTIPIVALTLTSYMGLTQPFLGLCAYMSTQVFGRRS) are Cytoplasmic-facing. A helical membrane pass occupies residues 1356–1376 (IPVNEALAAAGLVGVLAGLAF). Over 1377 to 1378 (QD) the chain is Lumenal. Residues 1379-1399 (MENFLGPIAVGGILMMLVSVA) traverse the membrane as a helical segment. Residues 1400-1456 (GKVDGLELKKLGEVSWEEEAEISGSSSRYDVALSEQGEFKLLSEDKVPWDQIVMTSL) lie on the Cytoplasmic side of the membrane. Residues 1407–1446 (LKKLGEVSWEEEAEISGSSSRYDVALSEQGEFKLLSEDKV) form an interacts with and activates NS3 protease region. Residues 1457–1477 (ALVGAAIHPFALLLVLGGWVL) constitute an intramembrane region (helical). Over 1478–2157 (HIKGARRSGD…RNALSMMPEA (680 aa)) the chain is Cytoplasmic. One can recognise a Peptidase S7 domain in the interval 1485-1665 (SGDVLWDIPT…EVKEESKEEL (181 aa)). Active-site charge relay system; for serine protease NS3 activity residues include H1537, D1561, and S1622. The region spanning 1669-1825 (PTMLKKGMTT…HSNGEIEDVQ (157 aa)) is the Helicase ATP-binding domain. Residues 1673–1676 (KKGM) are important for RNA-binding. 1682–1689 (FHPGAGKT) is an ATP binding site. The short motif at 1773-1776 (DEAH) is the DEAH box element. A Helicase C-terminal domain is found at 1820 to 1997 (EIEDVQTDIP…VRGGMVAPLY (178 aa)). K1877 is subject to N6-acetyllysine; by host. Residues 1942-1961 (AAQRRGRIGRNPNRDGDSYY) are disordered. Residues 2158–2178 (MTIVMLFILAGLLTSGMVIFF) form a helical membrane-spanning segment. Over 2179-2186 (MSPKGMSR) the chain is Lumenal. Residues 2187 to 2207 (MSMAMGTMAGSGYLMFLGGVK) constitute an intramembrane region (helical). At 2208–2209 (PT) the chain is on the lumenal side. The helical transmembrane segment at 2210–2230 (HISYVMLIFFVLMVVIIPEPG) threads the bilayer. Topologically, residues 2231–2241 (QQRTIQDNQVA) are cytoplasmic. A helical transmembrane segment spans residues 2242 to 2262 (YLIIGILTLLSIVAANELGML). Topologically, residues 2263-2293 (EKTKEDFFGRRNIATSGGTIPWSWPDLDLKP) are lumenal. Positions 2294-2314 (GAAWTVYVGIVTMLSPMLHHW) form an intramembrane region, helical. Residues 2315–2360 (IKVEYGNLSLSGIAQSASVLSFMDKGIPFMKMNISVVILLVSGWNS) are Lumenal-facing. Residues 2361–2380 (ITVIPLLCGVGGAMLHWTLI) traverse the membrane as a helical segment. Topologically, residues 2381 to 2421 (LPGIKAQQSKLAQKRVFHGVAKNPVVDGNPTADIEEAPEMP) are cytoplasmic. The helical transmembrane segment at 2422-2442 (ALYEKKLALYLLLALSLMSVA) threads the bilayer. The Lumenal portion of the chain corresponds to 2443-2445 (MCR). A helical transmembrane segment spans residues 2446–2466 (TPFSLAEGIVLSSAALGPLIE). The Cytoplasmic portion of the chain corresponds to 2467–3411 (GNTSLLWNGP…VDADLQPGEL (945 aa)). The 265-residue stretch at 2508–2772 (GSASGKTLGE…DVILPIGTRS (265 aa)) folds into the mRNA cap 0-1 NS5-type MT domain. S2563 serves as a coordination point for S-adenosyl-L-methionine. S2563 carries the post-translational modification Phosphoserine. The active-site For 2'-O-MTase activity is K2568. Residues G2593, W2594, T2611, L2612, D2638, and I2639 each contribute to the S-adenosyl-L-methionine site. The active-site For 2'-O-MTase activity is D2653. S-adenosyl-L-methionine is bound at residue I2654. Active-site for 2'-O-MTase activity residues include K2689 and E2725. S-adenosyl-L-methionine is bound at residue Y2727. The short motif at 2879 to 2912 (RKIMKVVNRWLFRHLAREKNPRLCTKEEFIAKVR) is the Nuclear localization signal element. Zn(2+) contacts are provided by E2946, H2950, C2955, and C2958. Positions 3036–3188 (GGFYADDTAG…RPVDDRFGLA (153 aa)) constitute a RdRp catalytic domain. Zn(2+) contacts are provided by H3223, C3239, and C3358.

In the N-terminal section; belongs to the class I-like SAM-binding methyltransferase superfamily. mRNA cap 0-1 NS5-type methyltransferase family. In terms of assembly, homodimer. Interacts (via N-terminus) with host EXOC1 (via C-terminus); this interaction results in EXOC1 degradation through the proteasome degradation pathway. As to quaternary structure, forms heterodimers with envelope protein E in the endoplasmic reticulum and Golgi. Homodimer; in the endoplasmic reticulum and Golgi. Interacts with protein prM. Interacts with non-structural protein 1. In terms of assembly, homodimer; Homohexamer when secreted. Interacts with envelope protein E. As to quaternary structure, interacts (via N-terminus) with serine protease NS3. Forms a heterodimer with serine protease NS3. May form homooligomers. In terms of assembly, forms a heterodimer with NS2B. Interacts with non-structural protein 2A (via N-terminus). Interacts with NS4B. Interacts with unphosphorylated RNA-directed RNA polymerase NS5; this interaction stimulates RNA-directed RNA polymerase NS5 guanylyltransferase activity. NS3 interacts with host PDCD6IP; this interaction contributes to virion release. As to quaternary structure, interacts with serine protease NS3. Homodimer. Interacts with host STAT2; this interaction prevents the establishment of cellular antiviral state. Interacts with serine protease NS3. Interacts with host TRIM23; this interaction leads to NS5 ubiquitination. Post-translationally, specific enzymatic cleavages in vivo yield mature proteins. The nascent capsid protein C contains a C-terminal hydrophobic domain that act as a signal sequence for translocation of prM into the lumen of the ER. Mature capsid protein C is cleaved at a site upstream of this hydrophobic domain by NS3. prM is cleaved in post-Golgi vesicles by a host furin, releasing the mature small envelope protein M, and peptide pr. Non-structural protein 2A-alpha, a C-terminally truncated form of non-structural protein 2A, results from partial cleavage by NS3. Specific enzymatic cleavages in vivo yield mature proteins peptide 2K acts as a signal sequence and is removed from the N-terminus of NS4B by the host signal peptidase in the ER lumen. Signal cleavage at the 2K-4B site requires a prior NS3 protease-mediated cleavage at the 4A-2K site. Cleaved in post-Golgi vesicles by a host furin, releasing the mature small envelope protein M, and peptide pr. This cleavage is incomplete as up to 30% of viral particles still carry uncleaved prM. In terms of processing, N-glycosylated. Post-translationally, N-glycosylated. The excreted form is glycosylated and this is required for efficient secretion of the protein from infected cells. Polyubiquitinated; ubiquitination is probably mediated by host TRIM23 and is prerequisite for NS5-STAT2 interaction. NS5 is not ISGylated or sumoylated. In terms of processing, acetylated by host KAT5. Acetylation modulates NS3 RNA-binding and unwinding activities and plays an important positive role for viral replication. Post-translationally, phosphorylated on serines residues. This phosphorylation may trigger NS5 nuclear localization.

The protein localises to the virion. It localises to the host nucleus. It is found in the host cytoplasm. The protein resides in the host perinuclear region. Its subcellular location is the secreted. The protein localises to the virion membrane. It localises to the host endoplasmic reticulum membrane. The enzyme catalyses Selective hydrolysis of -Xaa-Xaa-|-Yaa- bonds in which each of the Xaa can be either Arg or Lys and Yaa can be either Ser or Ala.. It catalyses the reaction RNA(n) + a ribonucleoside 5'-triphosphate = RNA(n+1) + diphosphate. It carries out the reaction a ribonucleoside 5'-triphosphate + H2O = a ribonucleoside 5'-diphosphate + phosphate + H(+). The catalysed reaction is ATP + H2O = ADP + phosphate + H(+). The enzyme catalyses a 5'-end (5'-triphosphoguanosine)-ribonucleoside in mRNA + S-adenosyl-L-methionine = a 5'-end (N(7)-methyl 5'-triphosphoguanosine)-ribonucleoside in mRNA + S-adenosyl-L-homocysteine. It catalyses the reaction a 5'-end (N(7)-methyl 5'-triphosphoguanosine)-ribonucleoside in mRNA + S-adenosyl-L-methionine = a 5'-end (N(7)-methyl 5'-triphosphoguanosine)-(2'-O-methyl-ribonucleoside) in mRNA + S-adenosyl-L-homocysteine + H(+). Its function is as follows. Plays a role in virus budding by binding to the cell membrane and gathering the viral RNA into a nucleocapsid that forms the core of a mature virus particle. During virus entry, may induce genome penetration into the host cytoplasm after hemifusion induced by the surface proteins. Can migrate to the cell nucleus where it modulates host functions. In terms of biological role, inhibits RNA silencing by interfering with host Dicer. Prevents premature fusion activity of envelope proteins in trans-Golgi by binding to envelope protein E at pH6.0. After virion release in extracellular space, gets dissociated from E dimers. Functionally, acts as a chaperone for envelope protein E during intracellular virion assembly by masking and inactivating envelope protein E fusion peptide. prM is the only viral peptide matured by host furin in the trans-Golgi network probably to avoid catastrophic activation of the viral fusion activity in acidic Golgi compartment prior to virion release. prM-E cleavage is inefficient, and many virions are only partially matured. These uncleaved prM would play a role in immune evasion. Its function is as follows. May play a role in virus budding. Exerts cytotoxic effects by activating a mitochondrial apoptotic pathway through M ectodomain. May display a viroporin activity. In terms of biological role, binds to host cell surface receptor and mediates fusion between viral and cellular membranes. Envelope protein is synthesized in the endoplasmic reticulum in the form of heterodimer with protein prM. They play a role in virion budding in the ER, and the newly formed immature particle is covered with 60 spikes composed of heterodimer between precursor prM and envelope protein E. The virion is transported to the Golgi apparatus where the low pH causes dissociation of PrM-E heterodimers and formation of E homodimers. prM-E cleavage is inefficient, and many virions are only partially matured. These uncleaved prM would play a role in immune evasion. Involved in immune evasion, pathogenesis and viral replication. Once cleaved off the polyprotein, is targeted to three destinations: the viral replication cycle, the plasma membrane and the extracellular compartment. Essential for viral replication. Required for formation of the replication complex and recruitment of other non-structural proteins to the ER-derived membrane structures. Excreted as a hexameric lipoparticle that plays a role against host immune response. Antagonizing the complement function. Binds to the host macrophages and dendritic cells. Inhibits signal transduction originating from Toll-like receptor 3 (TLR3). Functionally, component of the viral RNA replication complex that functions in virion assembly and antagonizes the host immune response. Its function is as follows. Required cofactor for the serine protease function of NS3. May have membrane-destabilizing activity and form viroporins. In terms of biological role, displays three enzymatic activities: serine protease, NTPase and RNA helicase. NS3 serine protease, in association with NS2B, performs its autocleavage and cleaves the polyprotein at dibasic sites in the cytoplasm: C-prM, NS2A-NS2B, NS2B-NS3, NS3-NS4A, NS4A-2K and NS4B-NS5. NS3 RNA helicase binds RNA and unwinds dsRNA in the 3' to 5' direction. Also plays a role in virus assembly. Regulates the ATPase activity of the NS3 helicase activity. NS4A allows NS3 helicase to conserve energy during unwinding. Functionally, functions as a signal peptide for NS4B and is required for the interferon antagonism activity of the latter. Its function is as follows. Induces the formation of ER-derived membrane vesicles where the viral replication takes place. Inhibits interferon (IFN)-induced host STAT1 phosphorylation and nuclear translocation, thereby preventing the establishment of cellular antiviral state by blocking the IFN-alpha/beta pathway. In terms of biological role, replicates the viral (+) and (-) RNA genome, and performs the capping of genomes in the cytoplasm. NS5 methylates viral RNA cap at guanine N-7 and ribose 2'-O positions. Besides its role in RNA genome replication, also prevents the establishment of cellular antiviral state by blocking the interferon-alpha/beta (IFN-alpha/beta) signaling pathway. IFN-I induces binding of NS5 to host IFN-activated transcription factor STAT2, preventing its transcriptional activity. Host TRIM23 is the E3 ligase that interacts with and polyubiquitinates NS5 to promote its binding to STAT2 and trigger IFN-I signaling inhibition. The protein is Genome polyprotein of Yellow fever virus (isolate Ethiopia/Couma/1961) (YFV).